The chain runs to 113 residues: Dolichyl-diphosphooligosaccharide--protein glycosyltransferase subunit DAD1 (113 aa).

Position 2 is an N-acetylserine (Ser2). At 2–30 the chain is on the cytoplasmic side; sequence SASVVSVISRFLEEYLSSTPQRLKLLDAY. The chain crosses the membrane as a helical span at residues 31 to 51; that stretch reads LLYILLTGALQFGYCLLVGTF. Position 52 (Pro52) is a topological domain, lumenal. Residues 53 to 73 traverse the membrane as a helical segment; that stretch reads FNSFLSGFISCVGSFILAVRL. The Cytoplasmic portion of the chain corresponds to 74–92; that stretch reads RIQINPQNKADFQGISPER. Residues 93–113 traverse the membrane as a helical segment; sequence AFADFLFASTILHLVVMNFVG.

It belongs to the DAD/OST2 family. As to quaternary structure, component of the oligosaccharyltransferase (OST) complex. OST exists in two different complex forms which contain common core subunits RPN1, RPN2, OST48, OST4, DAD1 and TMEM258, either STT3A or STT3B as catalytic subunits, and form-specific accessory subunits. STT3A complex assembly occurs through the formation of 3 subcomplexes. Subcomplex 1 contains RPN1 and TMEM258, subcomplex 2 contains the STT3A-specific subunits STT3A, DC2/OSTC, and KCP2 as well as the core subunit OST4, and subcomplex 3 contains RPN2, DAD1, and OST48. The STT3A complex can form stable complexes with the Sec61 complex or with both the Sec61 and TRAP complexes.

It localises to the endoplasmic reticulum membrane. It functions in the pathway protein modification; protein glycosylation. In terms of biological role, subunit of the oligosaccharyl transferase (OST) complex that catalyzes the initial transfer of a defined glycan (Glc(3)Man(9)GlcNAc(2) in eukaryotes) from the lipid carrier dolichol-pyrophosphate to an asparagine residue within an Asn-X-Ser/Thr consensus motif in nascent polypeptide chains, the first step in protein N-glycosylation. N-glycosylation occurs cotranslationally and the complex associates with the Sec61 complex at the channel-forming translocon complex that mediates protein translocation across the endoplasmic reticulum (ER). All subunits are required for a maximal enzyme activity. This chain is Dolichyl-diphosphooligosaccharide--protein glycosyltransferase subunit DAD1, found in Pongo abelii (Sumatran orangutan).